The following is a 207-amino-acid chain: Adenine phosphoribosyltransferase (207 aa).

Positions Met-1–Ala-33 are disordered.

The protein belongs to the purine/pyrimidine phosphoribosyltransferase family. As to quaternary structure, homodimer.

Its subcellular location is the cytoplasm. The enzyme catalyses AMP + diphosphate = 5-phospho-alpha-D-ribose 1-diphosphate + adenine. It participates in purine metabolism; AMP biosynthesis via salvage pathway; AMP from adenine: step 1/1. Its function is as follows. Catalyzes a salvage reaction resulting in the formation of AMP, that is energically less costly than de novo synthesis. This chain is Adenine phosphoribosyltransferase, found in Corynebacterium jeikeium (strain K411).